A 1163-amino-acid polypeptide reads, in one-letter code: GTPase-activating protein (1163 aa).

2 consecutive C2 domains span residues Pro26–Phe148 and Thr261–Tyr419. Residues Glu520–Ile737 form the Ras-GAP domain. The PH domain maps to Leu762–Leu860. Residues Asn862–Lys898 form a Btk-type zinc finger. Residues His870, Cys881, Cys882, and Cys892 each contribute to the Zn(2+) site. Disordered regions lie at residues Leu1026–Phe1051 and Pro1091–Tyr1163. Over residues Pro1091–Gln1157 the composition is skewed to low complexity.

In terms of assembly, interacts with sty. In terms of tissue distribution, in third instar larvae eye imaginal disk, expressed in cells posterior to the morphogenetic furrow, in all photoreceptor and cone cell precursors as well as in still uncommitted cells.

In terms of biological role, inhibitory regulator of the Ras-cyclic AMP pathway. May function as a negative regulator of Ras85D/Ras1 in the sev signaling pathway. Acts cell autonomously in cone cell precursors as a negative regulator of R7 photoreceptor cell determination. The polypeptide is GTPase-activating protein (RasGAP1) (Drosophila melanogaster (Fruit fly)).